The chain runs to 3056 residues: MTTINIGTIPVVINQNADTQMGEGTKNIFPIVKDFVDPFADLEMRCAERVKRMGELCFSKKGRYITMIPKPDYIKAREKEQREEELNFQNSEHVLNSLDTTCTPEHHSSRNNGMQVSFKTQHYKRTFRKPRIQAKKRDLKGQHTIHYVAKELLSIVKKRDMVLEVVDKRKHANFATFRRYGKTYGMHITLNHMVRKRRRVDVTLNKLMTEIAMHCAIPFECLNTLTLRKGHSGLVLQTETVPNVHKIKSKITIVRGVVNEGNIPVLIDARKKLSGRDMSTIREFSAGDLFWKGYNQTFIDNRPTDLNHQCTSDLNVTQCGSVMALLTLALFPCGRITCKKCVENFLNQNNKERFNNASVFINQVIQLLEKGFSEFKHSKEILLMFKERLQMENPATDQCMEIAKATAALPEAPFSHIKEINNVLLKYGSLSNEEVGGASKHLLEVVRYIRNRTDSIQRNDLSKFRNKISSKTHINLDLMCDNQLDKNANFVWGQRAYHAKRFLSNYFNEINPSEGYDKFIFRKLPNGARELAIGRLIMPTNFEAFREQMKGKMIDNGPIGKDCVSRMRGSFCYPCCCTTDDVGTAVISDFKMPTKYHLVLGGNDLAKYIKLPTDTTGNMYIAKDGFCHINIFFAMLVNVSEEKSKDFTKMVRDQIMPKLGEWPTMMDVATACWQLTVWFPDTLSAELPRILVDHKLGIMHVLDSYGSISAGYHVLKANIVSQLIKFASDDLESELKYYRVGGDCNFGSRVRIDTKFLLKSIYRPDLLERIIEHEPFVLVLAMQSPAVLLALFNSASLEKAVQYWMHREMQVSHIMTLLAVLASNVSASKLLTTQFEIIEASAPQILAEMDKVHLPMHSIHSANVFLMNMSESRETDKTIDELGFYSFKKSSRILMEKTLMADLEEQWQGLGLLERLSLIKRSWRVRAKYSSFAIQREEPGIRDKFTTSLKLSGAQIKQQLLAQKDQAVHFVERRIEGTKKFVANQSISLIKMCLPRLADIVNILTVIALLNAILAFMLDHIKRFNEARRIAQEKKEKQHLKELNTLYNKYWDNEKPTYLEFKSDVIEKLPHTLATFEKYYFEDDKYTFQAKPNDMVALEKIIAVTALVLMIFDAERSDCVYKVLNKLKGILSTTTQDAYRFQSLDTSKTLLEEKEMTIDFEINEGEVKAFSGTQTTFSEWWDNQLQNGNVITHYRTEGQFMEFTRANAQPVANEIAHNDAHDILVRGAVGSGKSTGLPFYLSNKGKVLMIESTRPLAENVFKQLKSEPFYASPTLRMRGTTSYGASPITIMTSGYALHYYANNPAMMKEYKFVIIDECHVHDANAIAFVSLLKEYSFDGKLIKVSATPPGREVEFTTQYPVTLVTEESLSFEQFVSQQGTGANCDMLDVCDNILVYVASYNEVDQLSKMLLDRGHIVTKVDGRTMKNGKTEIESKGSRSKRHFIVATNIIENGVTLDIEGVVDFGLKVVPELDVDNRLMRYTKQNVSYGERIQRLGRVGRHKAGKALRIGVTEKGLVKPPSVITTEAAFYCFAYGLPVMAEGVTPSLLSKCTVQQARSMMSFELPIMYTVNLVRFDGTMHPSVHNLLKPYKLRDSNVVLNKMAIPHGNVRNWPTVRDFKCMGVRIDAPEDTRVPFHARDIPDKLHKEIFEVCCKYKGDAGFSKLNVVNACKIAYTLQTDPSSIQRTIKILDELIAREQQKREYFQNVANTSCAGSSYSLSNIINAIRARSTSDYTQENLSVLHSARAQLLEFKNINSDFSNLSTLSEFGALECLQFESLQEISKHLQLKGHWNKPVLIQDFLIAAGVLGGGCWMLYQYFKQETSKAFVFQGKNRRTKQKLRFRDARDMKGRMEVYADEGTIVENFGSKYTKKGKVRGTTTGMGTKTRRFTNMYGFDPTEYSFARYLDPITGETLDEQPITNLNLVSEHFQEMRRKYRENEIMESQQFAANPRIEAYFVKDAGQKVLKVDLTPHKPLLYSDKFGNIMGYPEREGELRQTGAAEFIDPKELPEPKESTDFDFESLSKIGGLRDYNPIAANVCLLENESAEYCDEIYGIGYGNVIITNQHLFRHNNGELTIKSKHGTFKCKNTCALKLLPIEGHDLLLIQMPKDFPVFPQKLRFREPTHEDKIVLVSTNFQEKSFSSVVSESSNISRVKQANFFKHWISTVAGQCGNPMVSTKDGFIVGIHSLTAVSGDLNVFTSIPPNFEDEVLKQMSKKSWCCGWKLNMSQIGWDGIKIVDDQPKDPFPVSKMVGLLNDLQLSFQSAKNTKWLLERAHGNIKAVAQASSALVTKHVVKGKCRLFEVYLTTDEEAEKFFRPLMGAYQKSRLNKEAYVKDLMKYATPIEVGLVDTRCFERSFEKVQNMLELKGFSKCNYVTYGPDILSALNMKAAMGALYSGKKKDHFSEISEEKFDNILQASCERLYSGRMGVWNGSLKAELRPQEKVLANKTRSFTAAPIDTLLAGKVCVDDFNNKFYSLHLKIPSTVGITKFYGGWDRLLDSLPDGWVYCDADGSQFDSSLTPYLLNAVLEMRLRLMEEWDLGEQMLKNLYTEIVYTPILTPDGTIVKKFKGNNSGQPSTVVDNTLMVIMAVYYAAEKLGIKGNLEDTLVFFANGDDLLIAIKPECESYLDKFEGLFSELGLKYDFSSRTKNKGDLWFMSHRGIQIDGMWIPKLEEERIVSILEWDRAIQPEHRLEAICAAMIEAWGYPTLLNHIRKFYLWVLGQAPYSQLSAEGKAPYISEVALKHLYTEEKVTPTELERYNIALIDCFESESDEVLTCRFQSDQEQLNAGEEKKDKRKKNEGDPNKDSEGQSVRQIVPDRDVNAGTVGTFSVPRLKKIAGKLNIPKIGGKIVLNLDHLLEYNPPQDDISNVIATQAQFEAWYNGVKQAYEVEDSQMGIILNGLMVWCIENGTSGDLQGEWTMMDGEEQVTYPLKPILDNAKPTFRQIMSHFSEVAEAYIEKRNATERYMPRYGLQRNLTDYGLARYAFDFYKLTSRTPVRAREAHMQMKAAAVRGKSTRLFGLDGNVGTDEENTERHTAGDVNRDMHTMLGVRI.

One can recognise a Peptidase S30 domain in the interval 139–284 (LKGQHTIHYV…GRDMSTIREF (146 aa)). Catalysis depends on for P1 proteinase activity residues histidine 192, aspartate 201, and serine 232. Positions 335 to 338 (RITC) match the Involved in interaction with stylet and aphid transmission motif. Positions 593 to 595 (PTK) match the Involved in virions binding and aphid transmission motif. A Peptidase C6 domain is found at 619 to 741 (MYIAKDGFCH…ESELKYYRVG (123 aa)). Active-site for helper component proteinase activity residues include cysteine 627 and histidine 700. The region spanning 1214–1366 (EIAHNDAHDI…TQYPVTLVTE (153 aa)) is the Helicase ATP-binding domain. Residue 1227-1234 (GAVGSGKS) participates in ATP binding. The short motif at 1316–1319 (DECH) is the DECH box element. The region spanning 1385–1544 (DMLDVCDNIL…GLPVMAEGVT (160 aa)) is the Helicase C-terminal domain. A Nuclear localization signal motif is present at residues 1871–1878 (KKGKVRGT). Tyrosine 1893 is modified (O-(5'-phospho-RNA)-tyrosine). The Peptidase C4 domain maps to 2022-2240 (SLSKIGGLRD…IGWDGIKIVD (219 aa)). Catalysis depends on for nuclear inclusion protein A activity residues histidine 2067, aspartate 2102, and cysteine 2172. Residues 2507-2630 (WVYCDADGSQ…AIKPECESYL (124 aa)) enclose the RdRp catalytic domain. The tract at residues 2788–2820 (QLNAGEEKKDKRKKNEGDPNKDSEGQSVRQIVP) is disordered. Positions 2792–2811 (GEEKKDKRKKNEGDPNKDSE) are enriched in basic and acidic residues. At threonine 3040 the chain carries Phosphothreonine.

The protein belongs to the potyviridae genome polyprotein family. In terms of assembly, interacts with host eIF4E protein (via cap-binding region); this interaction mediates the translation of the VPg-viral RNA conjugates. Part of a complex that comprises VPg, RNA, host EIF4E and EIF4G; this interaction mediates the translation of the VPg-viral RNA conjugates. In terms of processing, VPg is uridylylated by the polymerase and is covalently attached to the 5'-end of the genomic RNA. This uridylylated form acts as a nucleotide-peptide primer for the polymerase. Post-translationally, potyviral RNA is expressed as two polyproteins which undergo post-translational proteolytic processing. Genome polyprotein is processed by NIa-pro, P1 and HC-pro proteinases resulting in the production of at least ten individual proteins. P3N-PIPO polyprotein is cleaved by P1 and HC-pro proteinases resulting in the production of three individual proteins. The P1 proteinase and the HC-pro cleave only their respective C-termini autocatalytically. 6K1 is essential for proper proteolytic separation of P3 from CI.

The protein resides in the host cytoplasmic vesicle. It is found in the host nucleus. Its subcellular location is the virion. The enzyme catalyses RNA(n) + a ribonucleoside 5'-triphosphate = RNA(n+1) + diphosphate. The catalysed reaction is Hydrolyzes glutaminyl bonds, and activity is further restricted by preferences for the amino acids in P6 - P1' that vary with the species of potyvirus, e.g. Glu-Xaa-Xaa-Tyr-Xaa-Gln-|-(Ser or Gly) for the enzyme from tobacco etch virus. The natural substrate is the viral polyprotein, but other proteins and oligopeptides containing the appropriate consensus sequence are also cleaved.. It catalyses the reaction Hydrolyzes a Gly-|-Gly bond at its own C-terminus, commonly in the sequence -Tyr-Xaa-Val-Gly-|-Gly, in the processing of the potyviral polyprotein.. Functionally, required for aphid transmission and also has proteolytic activity. Only cleaves a Gly-Gly dipeptide at its own C-terminus. Interacts with virions and aphid stylets. Acts as a suppressor of RNA-mediated gene silencing, also known as post-transcriptional gene silencing (PTGS), a mechanism of plant viral defense that limits the accumulation of viral RNAs. May have RNA-binding activity. In terms of biological role, has helicase activity. It may be involved in replication. Indispensable for virus replication. Reduces the abundance of host transcripts related to jasmonic acid biosynthesis therefore altering the host defenses. In order to increase its own stability, decreases host protein degradation pathways. Its function is as follows. Indispensable for virus replication. Functionally, mediates the cap-independent, EIF4E-dependent translation of viral genomic RNAs. Binds to the cap-binding site of host EIF4E and thus interferes with the host EIF4E-dependent mRNA export and translation. VPg-RNA directly binds EIF4E and is a template for transcription. Also forms trimeric complexes with EIF4E-EIF4G, which are templates for translation. In terms of biological role, has RNA-binding and proteolytic activities. An RNA-dependent RNA polymerase that plays an essential role in the virus replication. Its function is as follows. Involved in aphid transmission, cell-to-cell and systemis movement, encapsidation of the viral RNA and in the regulation of viral RNA amplification. The chain is Genome polyprotein from Arachis hypogaea (Peanut).